Reading from the N-terminus, the 173-residue chain is RNA polymerase sigma factor TcsR (173 aa).

Residues I122–K169 form a sigma-70 factor domain-4 region. The H-T-H motif DNA-binding region spans E143–L162.

The protein belongs to the sigma-70 factor family.

Sigma factors are initiation factors that promote the attachment of RNA polymerase to specific initiation sites and are then released. Transcriptional regulator specifically required to activate expression of the toxin gene locus, composed of tcsL and tcdE/utxA. The protein is RNA polymerase sigma factor TcsR of Paraclostridium sordellii (Clostridium sordellii).